Reading from the N-terminus, the 343-residue chain is Anthranilate phosphoribosyltransferase (343 aa).

5-phospho-alpha-D-ribose 1-diphosphate-binding positions include G81, 84–85 (GD), 91–94 (NVST), 109–117 (KHGNRSVSS), and S121. Residue G81 participates in anthranilate binding. Residue S93 coordinates Mg(2+). Anthranilate is bound at residue N112. R167 is a binding site for anthranilate. D226 and E227 together coordinate Mg(2+).

This sequence belongs to the anthranilate phosphoribosyltransferase family. As to quaternary structure, homodimer. It depends on Mg(2+) as a cofactor.

It carries out the reaction N-(5-phospho-beta-D-ribosyl)anthranilate + diphosphate = 5-phospho-alpha-D-ribose 1-diphosphate + anthranilate. It functions in the pathway amino-acid biosynthesis; L-tryptophan biosynthesis; L-tryptophan from chorismate: step 2/5. Its function is as follows. Catalyzes the transfer of the phosphoribosyl group of 5-phosphorylribose-1-pyrophosphate (PRPP) to anthranilate to yield N-(5'-phosphoribosyl)-anthranilate (PRA). This chain is Anthranilate phosphoribosyltransferase, found in Chromohalobacter salexigens (strain ATCC BAA-138 / DSM 3043 / CIP 106854 / NCIMB 13768 / 1H11).